Consider the following 267-residue polypeptide: tRNA pseudouridine synthase A (267 aa).

Asp-51 (nucleophile) is an active-site residue. Tyr-109 is a substrate binding site.

It belongs to the tRNA pseudouridine synthase TruA family. In terms of assembly, homodimer.

It catalyses the reaction uridine(38/39/40) in tRNA = pseudouridine(38/39/40) in tRNA. Formation of pseudouridine at positions 38, 39 and 40 in the anticodon stem and loop of transfer RNAs. The chain is tRNA pseudouridine synthase A from Staphylococcus aureus (strain USA300).